The sequence spans 216 residues: ATP phosphoribosyltransferase (216 aa).

This sequence belongs to the ATP phosphoribosyltransferase family. Short subfamily. In terms of assembly, heteromultimer composed of HisG and HisZ subunits.

Its subcellular location is the cytoplasm. It carries out the reaction 1-(5-phospho-beta-D-ribosyl)-ATP + diphosphate = 5-phospho-alpha-D-ribose 1-diphosphate + ATP. Its pathway is amino-acid biosynthesis; L-histidine biosynthesis; L-histidine from 5-phospho-alpha-D-ribose 1-diphosphate: step 1/9. Catalyzes the condensation of ATP and 5-phosphoribose 1-diphosphate to form N'-(5'-phosphoribosyl)-ATP (PR-ATP). Has a crucial role in the pathway because the rate of histidine biosynthesis seems to be controlled primarily by regulation of HisG enzymatic activity. The chain is ATP phosphoribosyltransferase from Acidovorax ebreus (strain TPSY) (Diaphorobacter sp. (strain TPSY)).